Here is a 1122-residue protein sequence, read N- to C-terminus: Maestro heat-like repeat-containing protein family member 7 (1122 aa).

Disordered stretches follow at residues 1-144 (MALS…LSED) and 183-203 (SHTI…NTSL). Positions 33 to 65 (TTPRPTPDLTLAPLPAHGVALAPALHPALSPDP) are enriched in low complexity. 3 stretches are compositionally biased toward polar residues: residues 75-95 (DISN…INTA), 120-136 (PVPS…SPEN), and 184-203 (HTIS…NTSL). Residues asparagine 200, asparagine 210, asparagine 255, asparagine 267, and asparagine 296 are each glycosylated (N-linked (GlcNAc...) asparagine). Positions 246–265 (WNTGSKGSVNVTSNSQPRSG) are disordered. Serine 356 is subject to Phosphoserine. The disordered stretch occupies residues 363–385 (FRSPPEGTSEDAKANESEKRDHD). Residues 372–385 (EDAKANESEKRDHD) show a composition bias toward basic and acidic residues. 2 N-linked (GlcNAc...) asparagine glycosylation sites follow: asparagine 541 and asparagine 546. Transmembrane regions (helical) follow at residues 548-568 (TLVT…LLLG) and 722-742 (LLPI…ALLM). HEAT repeat units follow at residues 913–950 (QELC…MEQV), 992–1029 (TKVQ…GQAK), 1035–1072 (SVYI…KLRM), and 1080–1117 (EQLT…FFLL).

It is found in the membrane. The sequence is that of Maestro heat-like repeat-containing protein family member 7 (Mroh7) from Rattus norvegicus (Rat).